The primary structure comprises 424 residues: Glutamyl-tRNA(Gln) amidotransferase subunit D (424 aa).

The segment at 58 to 79 (NTNGGLNGGKEHKTAGEEVQKS) is disordered. A compositionally biased stretch (basic and acidic residues) spans 66–78 (GKEHKTAGEEVQK). In terms of domain architecture, Asparaginase/glutaminase spans 84 to 406 (PKVAILSTGG…LGQTDEFNEA (323 aa)). Residues T94, T170, D171, and K247 contribute to the active site.

The protein belongs to the asparaginase 1 family. GatD subfamily. As to quaternary structure, heterodimer of GatD and GatE.

The catalysed reaction is L-glutamyl-tRNA(Gln) + L-glutamine + ATP + H2O = L-glutaminyl-tRNA(Gln) + L-glutamate + ADP + phosphate + H(+). Allows the formation of correctly charged Gln-tRNA(Gln) through the transamidation of misacylated Glu-tRNA(Gln) in organisms which lack glutaminyl-tRNA synthetase. The reaction takes place in the presence of glutamine and ATP through an activated gamma-phospho-Glu-tRNA(Gln). The GatDE system is specific for glutamate and does not act on aspartate. In Methanosarcina barkeri (strain Fusaro / DSM 804), this protein is Glutamyl-tRNA(Gln) amidotransferase subunit D.